The chain runs to 255 residues: Small ribosomal subunit protein eS1 (255 aa).

Residues 1–18 are compositionally biased toward basic residues; the sequence is MAVGKNKRLSKGKKGLKK. Positions 1–28 are disordered; that stretch reads MAVGKNKRLSKGKKGLKKRTQDPFSRKD. Ala-2 is modified (N-acetylalanine; partial). Positions 19-28 are enriched in basic and acidic residues; it reads RTQDPFSRKD.

This sequence belongs to the eukaryotic ribosomal protein eS1 family. As to quaternary structure, component of the small ribosomal subunit. Mature ribosomes consist of a small (40S) and a large (60S) subunit. The 40S subunit contains about 33 different proteins and 1 molecule of RNA (18S). The 60S subunit contains about 49 different proteins and 3 molecules of RNA (25S, 5.8S and 5S).

The protein localises to the cytoplasm. This chain is Small ribosomal subunit protein eS1, found in Ajellomyces dermatitidis (strain ER-3 / ATCC MYA-2586) (Blastomyces dermatitidis).